Reading from the N-terminus, the 195-residue chain is Phosphoribosylglycinamide formyltransferase (195 aa).

12 to 14 (GSN) is a binding site for N(1)-(5-phospho-beta-D-ribosyl)glycinamide. Residues Lys65, 90–93 (MRLI), and Asn107 contribute to the (6R)-10-formyltetrahydrofolate site. His109 acts as the Proton donor in catalysis.

The protein belongs to the GART family.

The catalysed reaction is N(1)-(5-phospho-beta-D-ribosyl)glycinamide + (6R)-10-formyltetrahydrofolate = N(2)-formyl-N(1)-(5-phospho-beta-D-ribosyl)glycinamide + (6S)-5,6,7,8-tetrahydrofolate + H(+). Its pathway is purine metabolism; IMP biosynthesis via de novo pathway; N(2)-formyl-N(1)-(5-phospho-D-ribosyl)glycinamide from N(1)-(5-phospho-D-ribosyl)glycinamide (10-formyl THF route): step 1/1. Catalyzes the transfer of a formyl group from 10-formyltetrahydrofolate to 5-phospho-ribosyl-glycinamide (GAR), producing 5-phospho-ribosyl-N-formylglycinamide (FGAR) and tetrahydrofolate. In Bacillus subtilis (strain 168), this protein is Phosphoribosylglycinamide formyltransferase.